A 296-amino-acid polypeptide reads, in one-letter code: tRNA dimethylallyltransferase (296 aa).

Residue 2-9 coordinates ATP; it reads GPTASGKT. 4–9 contributes to the substrate binding site; sequence TASGKT. 3 interaction with substrate tRNA regions span residues 27 to 30, 151 to 155, and 232 to 237; these read DSAL, QRLSR, and RCVGYR.

It belongs to the IPP transferase family. Monomer. It depends on Mg(2+) as a cofactor.

It catalyses the reaction adenosine(37) in tRNA + dimethylallyl diphosphate = N(6)-dimethylallyladenosine(37) in tRNA + diphosphate. In terms of biological role, catalyzes the transfer of a dimethylallyl group onto the adenine at position 37 in tRNAs that read codons beginning with uridine, leading to the formation of N6-(dimethylallyl)adenosine (i(6)A). The polypeptide is tRNA dimethylallyltransferase (Shewanella sp. (strain MR-7)).